Reading from the N-terminus, the 275-residue chain is Large ribosomal subunit protein uL2 (275 aa).

The disordered stretch occupies residues 220–275 (VRGAAMNPRDHPHGGGEGRAPRGMPTPKTKWGKPARGVKTRHNPRTDPFIIRRRTR). Basic and acidic residues predominate over residues 227-239 (PRDHPHGGGEGRA). Residues 249–262 (KWGKPARGVKTRHN) are compositionally biased toward basic residues.

Belongs to the universal ribosomal protein uL2 family. As to quaternary structure, part of the 50S ribosomal subunit. Forms a bridge to the 30S subunit in the 70S ribosome.

Its function is as follows. One of the primary rRNA binding proteins. Required for association of the 30S and 50S subunits to form the 70S ribosome, for tRNA binding and peptide bond formation. It has been suggested to have peptidyltransferase activity; this is somewhat controversial. Makes several contacts with the 16S rRNA in the 70S ribosome. The protein is Large ribosomal subunit protein uL2 of Roseiflexus sp. (strain RS-1).